Consider the following 515-residue polypeptide: RNA-splicing ligase RtcB homolog (515 aa).

Mn(2+) contacts are provided by Asp129, Cys132, His237, His269, and His363. Asn236–Glu240 is a GMP binding site. GMP contacts are provided by residues His363 to Asn364, Gly412 to Met415, Ser419, His438 to Gly441, and Lys514. The GMP-histidine intermediate role is filled by His438.

This sequence belongs to the RtcB family. As to quaternary structure, catalytic component of the tRNA-splicing ligase complex. Requires Mn(2+) as cofactor.

The catalysed reaction is a 3'-end 3'-phospho-ribonucleotide-RNA + a 5'-end dephospho-ribonucleoside-RNA + GTP = a ribonucleotidyl-ribonucleotide-RNA + GMP + diphosphate. The enzyme catalyses a 3'-end 2',3'-cyclophospho-ribonucleotide-RNA + a 5'-end dephospho-ribonucleoside-RNA + GTP + H2O = a ribonucleotidyl-ribonucleotide-RNA + GMP + diphosphate + H(+). Catalytic subunit of the tRNA-splicing ligase complex that acts by directly joining spliced tRNA halves to mature-sized tRNAs by incorporating the precursor-derived splice junction phosphate into the mature tRNA as a canonical 3',5'-phosphodiester. May act as an RNA ligase with broad substrate specificity, and may function toward other RNAs. The sequence is that of RNA-splicing ligase RtcB homolog from Ostreococcus tauri.